We begin with the raw amino-acid sequence, 583 residues long: Probable lysosomal cobalamin transporter (583 aa).

The next 10 helical transmembrane spans lie at 8 to 28 (LIWA…SVFI), 41 to 61 (VILT…LVPV), 95 to 115 (IVYY…IPFI), 145 to 165 (TVSF…VPVA), 188 to 208 (ALTF…VLYT), 312 to 332 (LLSG…MLLT), 347 to 367 (GYIL…VQSA), 375 to 395 (VIFT…ISAV), 418 to 438 (LLAT…TSMI), and 506 to 526 (FFGA…LLVM). A compositionally biased stretch (acidic residues) spans 541–552 (LDEDAEEAEEES). The segment at 541-562 (LDEDAEEAEEESLLANTRGRAE) is disordered.

The protein belongs to the LIMR family. LMBRD1 subfamily.

It is found in the lysosome membrane. Its function is as follows. Probable lysosomal cobalamin transporter. Required to export cobalamin from lysosomes allowing its conversion to cofactors. This chain is Probable lysosomal cobalamin transporter, found in Aspergillus oryzae (strain ATCC 42149 / RIB 40) (Yellow koji mold).